A 417-amino-acid chain; its full sequence is NADH-quinone oxidoreductase subunit D (417 aa).

Belongs to the complex I 49 kDa subunit family. NDH-1 is composed of 14 different subunits. Subunits NuoB, C, D, E, F, and G constitute the peripheral sector of the complex.

The protein localises to the cell inner membrane. It carries out the reaction a quinone + NADH + 5 H(+)(in) = a quinol + NAD(+) + 4 H(+)(out). Functionally, NDH-1 shuttles electrons from NADH, via FMN and iron-sulfur (Fe-S) centers, to quinones in the respiratory chain. The immediate electron acceptor for the enzyme in this species is believed to be ubiquinone. Couples the redox reaction to proton translocation (for every two electrons transferred, four hydrogen ions are translocated across the cytoplasmic membrane), and thus conserves the redox energy in a proton gradient. The polypeptide is NADH-quinone oxidoreductase subunit D (Burkholderia lata (strain ATCC 17760 / DSM 23089 / LMG 22485 / NCIMB 9086 / R18194 / 383)).